Reading from the N-terminus, the 102-residue chain is MTLRVVPESLAGASAAIEAVTARLAAAHAAAAPFIAAVIPPGSDSVSVCNAVEFSVHGSQHVAMAAQGVEELGRSGVGVAESGASYAARDALAAASYLSGGL.

A PE domain is found at 3–91; it reads LRVVPESLAG…SGASYAARDA (89 aa).

The protein belongs to the mycobacterial PE family.

The protein resides in the secreted. It localises to the cell envelope. It is found in the cell surface. May play a pivotal role in the evasion of host immune response by M.tuberculosis. Mediates production of IL-10 via activation of the p38 and ERK1/2 mitogen-activated protein kinase (MAPK) signaling pathways. This chain is PE family immunomodulator PE15 (PE15), found in Mycobacterium tuberculosis (strain CDC 1551 / Oshkosh).